Consider the following 395-residue polypeptide: Formate-dependent phosphoribosylglycinamide formyltransferase (395 aa).

N(1)-(5-phospho-beta-D-ribosyl)glycinamide contacts are provided by residues 22 to 23 (EL) and Glu82. Residues Arg115, Lys156, 161–166 (SSGKGQ), 196–199 (EGFI), and Glu204 contribute to the ATP site. The region spanning 120–309 (RLAAETLGLP…EFALHARAIL (190 aa)) is the ATP-grasp domain. Residues Glu268 and Glu280 each coordinate Mg(2+). Residues Asp287, Lys356, and 363–364 (RR) each bind N(1)-(5-phospho-beta-D-ribosyl)glycinamide.

The protein belongs to the PurK/PurT family. In terms of assembly, homodimer.

It carries out the reaction N(1)-(5-phospho-beta-D-ribosyl)glycinamide + formate + ATP = N(2)-formyl-N(1)-(5-phospho-beta-D-ribosyl)glycinamide + ADP + phosphate + H(+). It functions in the pathway purine metabolism; IMP biosynthesis via de novo pathway; N(2)-formyl-N(1)-(5-phospho-D-ribosyl)glycinamide from N(1)-(5-phospho-D-ribosyl)glycinamide (formate route): step 1/1. Involved in the de novo purine biosynthesis. Catalyzes the transfer of formate to 5-phospho-ribosyl-glycinamide (GAR), producing 5-phospho-ribosyl-N-formylglycinamide (FGAR). Formate is provided by PurU via hydrolysis of 10-formyl-tetrahydrofolate. The chain is Formate-dependent phosphoribosylglycinamide formyltransferase from Stenotrophomonas maltophilia (strain K279a).